We begin with the raw amino-acid sequence, 1273 residues long: DNA-directed RNA polymerase subunit beta (1273 aa).

Residues 1252-1273 form a disordered region; it reads ADDQDLVVSSNDEEVSENDERS.

The protein belongs to the RNA polymerase beta chain family. The RNAP catalytic core consists of 2 alpha, 1 beta, 1 beta' and 1 omega subunit. When a sigma factor is associated with the core the holoenzyme is formed, which can initiate transcription.

The catalysed reaction is RNA(n) + a ribonucleoside 5'-triphosphate = RNA(n+1) + diphosphate. DNA-dependent RNA polymerase catalyzes the transcription of DNA into RNA using the four ribonucleoside triphosphates as substrates. This is DNA-directed RNA polymerase subunit beta from Dehalococcoides mccartyi (strain ATCC BAA-2100 / JCM 16839 / KCTC 5957 / BAV1).